A 390-amino-acid chain; its full sequence is Neutrophil cytosol factor 1 (390 aa).

The PX domain occupies 4–125 (TFIRHIALLG…DFFKVRPDDL (122 aa)). SH3 domains are found at residues 156–215 (IILQ…PLDS) and 226–285 (YAGE…KAGE). The disordered stretch occupies residues 291–390 (QRQIRGRGAP…STKRKLTSAV (100 aa)). 4 positions are modified to phosphoserine: S304, S321, S329, and S346. Positions 374–383 (ILHRCTESTK) are enriched in basic and acidic residues.

Component of the phagocyte NADPH oxidase complex composed of an obligatory core heterodimer formed by the membrane proteins CYBA and CYBB and the cytosolic regulatory subunits NCF1/p47-phox, NCF2/p67-phox, NCF4/p40-phox and the small GTPase RAC1 or RAC2. Part of a cytosolic complex composed at least by NCF1, NCF2 and NCF4. Interacts (via C-terminus) with NCF2 (via the C-terminal SH3 domain). Interacts with NCF4. Interacts with CYBB. Interacts (via the second SH3 domain) with CYBA; interaction is phosphorylation-dependent. Interacts with NOXA1. Interacts with ADAM15. Interacts with TRAF4. Interacts with FASLG. Interacts with PARK7 (via C-terminus); the interaction is enhanced by LPS and modulates NCF1 phosphorylation and membrane translocation. Phosphorylated by PRKCD; phosphorylation induces activation of NCF1, leading to assembly and activation of the NADPH oxidase complex.

The protein localises to the cytoplasm. It is found in the cytosol. It localises to the membrane. Functionally, subunit of the phagocyte NADPH oxidase complex that mediates the transfer of electrons from cytosolic NADPH to O2 to produce the superoxide anion (O2(-)). In the activated complex, electrons are first transferred from NADPH to flavin adenine dinucleotide (FAD) and subsequently transferred via two heme molecules to molecular oxygen, producing superoxide through an outer-sphere reaction. Activation of the NADPH oxidase complex is initiated by the assembly of cytosolic subunits of the NADPH oxidase complex with the core NADPH oxidase complex to form a complex at the plasma membrane or phagosomal membrane. This activation process is initiated by phosphorylation dependent binding of the cytosolic NCF1/p47-phox subunit to the C-terminus of CYBA/p22-phox. The chain is Neutrophil cytosol factor 1 from Mus musculus (Mouse).